Consider the following 495-residue polypeptide: Glycerol kinase (495 aa).

Residue T11 participates in ADP binding. ATP-binding residues include T11, T12, and S13. Position 11 (T11) interacts with sn-glycerol 3-phosphate. Position 15 (R15) interacts with ADP. Sn-glycerol 3-phosphate contacts are provided by R81, E82, Y133, and D242. Glycerol-binding residues include R81, E82, Y133, D242, and Q243. ADP is bound by residues T264 and G307. 4 residues coordinate ATP: T264, G307, Q311, and G408. The ADP site is built by G408 and N412.

It belongs to the FGGY kinase family.

The enzyme catalyses glycerol + ATP = sn-glycerol 3-phosphate + ADP + H(+). It participates in polyol metabolism; glycerol degradation via glycerol kinase pathway; sn-glycerol 3-phosphate from glycerol: step 1/1. With respect to regulation, inhibited by fructose 1,6-bisphosphate (FBP). Its function is as follows. Key enzyme in the regulation of glycerol uptake and metabolism. Catalyzes the phosphorylation of glycerol to yield sn-glycerol 3-phosphate. The protein is Glycerol kinase of Rhodospirillum rubrum (strain ATCC 11170 / ATH 1.1.1 / DSM 467 / LMG 4362 / NCIMB 8255 / S1).